Consider the following 166-residue polypeptide: Regulatory protein RecX (166 aa).

This sequence belongs to the RecX family.

The protein resides in the cytoplasm. In terms of biological role, modulates RecA activity. This Escherichia coli O139:H28 (strain E24377A / ETEC) protein is Regulatory protein RecX.